A 374-amino-acid chain; its full sequence is MESLLQHLDRFSELLAVSSTTYVSTWDPATVRRALQWARYLRHIHRRFGRHGPIRTALERRLHNQWRQEGGFGRGPVPGLANFQALGHCDVLLSLRLLENRALGDAARYHLVQQLFPGPGVRDADEETLQESLARLARRRSAVHMLRFNGYRENPNLQEDSLMKTQAELLLERLQEVGKAEAERPARFLSSLWERLPQNNFLKVIAVALLQPPLSRRPQEELEPGIHKSPGEGSQVLVHWLLGNSEVFAAFCRALPAGLLTLVTSRHPALSPVYLGLLTDWGQRLHYDLQKGIWVGTESQDVPWEELHNRFQSLCQAPPPLKDKVLTALETCKAQDGDFEVPGLSIWTDLLLALRSGAFRKRQVLGLSAGLSSV.

In terms of assembly, belongs to the multisubunit FA complex composed of FANCA, FANCB, FANCC, FANCE, FANCF, FANCG, FANCL/PHF9 and FANCM. The complex is not found in FA patients. In complex with FANCA, FANCG and FANCL, but not with FANCC, nor FANCE, interacts with HES1; this interaction may be essential for the stability and nuclear localization of FA core complex proteins.

It is found in the nucleus. In terms of biological role, DNA repair protein that may operate in a postreplication repair or a cell cycle checkpoint function. May be implicated in interstrand DNA cross-link repair and in the maintenance of normal chromosome stability. The sequence is that of Fanconi anemia group F protein (FANCF) from Homo sapiens (Human).